The sequence spans 159 residues: Nutritionally-regulated adipose and cardiac-enriched protein homolog (159 aa).

Residues 1–67 are disordered; the sequence is MKTAVHALSP…GDEPRRTTRH (67 aa). 2 stretches are compositionally biased toward basic and acidic residues: residues 12–25 and 50–63; these read SRPE…KNEE and SPQE…EPRR. A helical transmembrane segment spans residues 107–124; it reads LTACILLALALGMCCGQA.

The protein localises to the cell membrane. The polypeptide is Nutritionally-regulated adipose and cardiac-enriched protein homolog (NRAC) (Bos taurus (Bovine)).